The following is a 524-amino-acid chain: MAGLLSTFDTFSSRRSESINKSGGGAVIPGQRSTVSVFVLGPSVTDDADKLSIATTFLAHSLDTDKQHSQRGGFLVSLLAMAYSSPELYLTTNGVNADVKYVIYNIEKDPKRTKTDGFIVKTRDMEYERTTEWLFGPMVNKSPLFQGQRDAADPDTLLQIYGYPACLGAIIVQVWIVLVKAITSSAGLRKGFFNRLEAFRQDGTVKGALVFTGETVEGIGSVMRSQQSLVSLMVETLVTMNTARSDLTTLEKNIQIVGNYIRDAGLASFMNTIKYGVETKMAALTLSNLRPDINKLRSLIDTYLSKGPRAPFICILKDPVHGEFAPGNYPALWSYAMGVAVVQNKAMQQYVTGRTYLDMEMFLLGQAVAKDAESKISSALEDELGVTDTAKERLRHHLANLSGGDGAYHKPTGGGAIEVALDNADIDLEPEAHTDQDARGWGGDSGDRWARSMGSGHFITLHGAERLEEETNDEDVSDIERRIARRLAERRQEDATTHEDEGRNNGVDHDEEDDAAAAAGMGGI.

The segment at 1–404 is ncore; sequence MAGLLSTFDT…RHHLANLSGG (404 aa). RNA-binding residues include Lys180, Lys190, Arg195, Tyr260, Tyr350, Arg354, and Tyr356. Residues 405–524 form a ntail region; the sequence is DGAYHKPTGG…AAAAAGMGGI (120 aa). Residues 440-461 form a homomultimerization region; that stretch reads GWGGDSGDRWARSMGSGHFITL. Residues 462-471 form an interaction with the phosphoprotein region; it reads HGAERLEEET. Residues 487–508 show a composition bias toward basic and acidic residues; the sequence is LAERRQEDATTHEDEGRNNGVD. Positions 487 to 524 are disordered; the sequence is LAERRQEDATTHEDEGRNNGVDHDEEDDAAAAAGMGGI.

The protein belongs to the paramyxoviruses nucleocapsid family. As to quaternary structure, homomultimer; forms the nucleocapsid. Binds to the viral genomic RNA. N0 interacts with the phosphoprotein (via N-terminus); this interaction allows P to chaperon N0 to avoid N polymerization before encapsidation. Interacts as N-RNA template with the phosphoprotein (via C-terminus); this interaction positions the polymerase on the template.

Its subcellular location is the virion. It localises to the host cytoplasm. Its function is as follows. Forms the helical nucleocapsid (NC) in a ratio of 1 N per 6 ribonucleotides, protecting the genome from nucleases. The encapsidated genomic RNA serves as template for transcription and replication; encapsidation by N is coupled to RNA synthesis. Forms the encapsidation complex with the phosphoprotein protein P. Before encapsidation, the newly synthesized free N protein, so-called N0, is chaperoned by P. The chain is Nucleoprotein (N) from Sendai virus (strain Ohita) (SeV).